The chain runs to 515 residues: Cytoplasmic dynein 1 light intermediate chain 1 (515 aa).

A compositionally biased stretch (low complexity) spans 1 to 24 (MAAVGRAGSFGSSSASGAANNASA). The tract at residues 1–34 (MAAVGRAGSFGSSSASGAANNASAELRAGGEEDD) is disordered. 64-71 (GEDGAGKT) is an ATP binding site. 2 disordered regions span residues 370–424 (QSQL…DPNM) and 445–515 (KTGS…GEAS). Positions 397–409 (RTPNRSVTSNVAS) are enriched in polar residues. The segment covering 448–468 (SPGGPGGVGGSPGGGSAGGTG) has biased composition (gly residues). Basic and acidic residues predominate over residues 490-499 (ELDRISRKPE). The span at 502–515 (SPTSPTSPTEGEAS) shows a compositional bias: polar residues.

Belongs to the dynein light intermediate chain family. In terms of assembly, homodimer. The cytoplasmic dynein 1 complex consists of two catalytic heavy chains (HCs) and a number of non-catalytic subunits presented by intermediate chains (ICs). Phosphorylated.

It localises to the cytoplasm. The protein resides in the cytoskeleton. Its subcellular location is the chromosome. The protein localises to the centromere. It is found in the kinetochore. It localises to the spindle pole. The protein resides in the recycling endosome membrane. Functionally, acts as one of several non-catalytic accessory components of the cytoplasmic dynein 1 complex that are thought to be involved in linking dynein to cargos and to adapter proteins that regulate dynein function. Cytoplasmic dynein 1 acts as a motor for the intracellular retrograde motility of vesicles and organelles along microtubules. May play a role in binding dynein to membranous organelles or chromosomes. May regulate the movement of peripheral sorting endosomes along microtubule tracks toward the microtubule organizing center/centrosome, generating the endosomal recycling compartment. The sequence is that of Cytoplasmic dynein 1 light intermediate chain 1 (DYNC1LI1) from Gallus gallus (Chicken).